The sequence spans 419 residues: DNA ligase (419 aa).

The NTD stretch occupies residues 1–120 (MLNQFPGQYS…ARQKRGAHTN (120 aa)). The AD domain stretch occupies residues 121 to 317 (RGMIPPMLVK…NYHSAHLAKL (197 aa)). 4 residues coordinate ATP: Gln149, Lys151, Glu203, and Phe232. Catalysis depends on Lys151, which acts as the N6-AMP-lysine intermediate. A divalent metal cation is bound at residue Glu203. Glu291 provides a ligand contact to a divalent metal cation. Residues Ile294 and Lys316 each coordinate ATP. An OB domain region spans residues 318–419 (KPLLDAEFIL…REPINVLEII (102 aa)).

This sequence belongs to the ATP-dependent DNA ligase family. Requires a divalent metal cation as cofactor.

The protein resides in the virion. It carries out the reaction ATP + (deoxyribonucleotide)n-3'-hydroxyl + 5'-phospho-(deoxyribonucleotide)m = (deoxyribonucleotide)n+m + AMP + diphosphate.. Functionally, very low-fidelity DNA ligase that seals nicks in double-stranded DNA during DNA repair. Together with the viral repair DNA polymerase X, fills the single nucleotide gaps generated by the AP endonuclease. It is not essential for viral replication and recombination. Displays a very low adenylation activity towards DNA with 3'-dideoxy- or 3'-amino-terminated nicks compared to regular nick DNA. The sequence is that of DNA ligase (LIG) from Ornithodoros (relapsing fever ticks).